The chain runs to 128 residues: Saitohin (128 aa).

The segment at 77–128 (SYSSEESSRNGAEQGRQLSIEGPFQGQNCPSHPAAALPLPMRGESQATSCQV) is disordered.

As to quaternary structure, interacts with PRDX6.

The protein resides in the cytoplasm. It localises to the nucleus. In Gorilla gorilla gorilla (Western lowland gorilla), this protein is Saitohin (STH).